The primary structure comprises 202 residues: Holliday junction branch migration complex subunit RuvA (202 aa).

Residues methionine 1 to alanine 64 form a domain I region. The tract at residues serine 65–alanine 143 is domain II. The segment at leucine 144–proline 154 is flexible linker. Positions proline 154–isoleucine 202 are domain III.

It belongs to the RuvA family. Homotetramer. Forms an RuvA(8)-RuvB(12)-Holliday junction (HJ) complex. HJ DNA is sandwiched between 2 RuvA tetramers; dsDNA enters through RuvA and exits via RuvB. An RuvB hexamer assembles on each DNA strand where it exits the tetramer. Each RuvB hexamer is contacted by two RuvA subunits (via domain III) on 2 adjacent RuvB subunits; this complex drives branch migration. In the full resolvosome a probable DNA-RuvA(4)-RuvB(12)-RuvC(2) complex forms which resolves the HJ.

The protein localises to the cytoplasm. Its function is as follows. The RuvA-RuvB-RuvC complex processes Holliday junction (HJ) DNA during genetic recombination and DNA repair, while the RuvA-RuvB complex plays an important role in the rescue of blocked DNA replication forks via replication fork reversal (RFR). RuvA specifically binds to HJ cruciform DNA, conferring on it an open structure. The RuvB hexamer acts as an ATP-dependent pump, pulling dsDNA into and through the RuvAB complex. HJ branch migration allows RuvC to scan DNA until it finds its consensus sequence, where it cleaves and resolves the cruciform DNA. The polypeptide is Holliday junction branch migration complex subunit RuvA (Pseudomonas fluorescens (strain ATCC BAA-477 / NRRL B-23932 / Pf-5)).